A 335-amino-acid polypeptide reads, in one-letter code: Beta-ketoacyl-[acyl-carrier-protein] synthase III (335 aa).

Active-site residues include Cys118 and His259. The interval 260–264 (QANER) is ACP-binding. Asn289 is an active-site residue.

This sequence belongs to the thiolase-like superfamily. FabH family. Homodimer.

It localises to the cytoplasm. It catalyses the reaction malonyl-[ACP] + acetyl-CoA + H(+) = 3-oxobutanoyl-[ACP] + CO2 + CoA. It participates in lipid metabolism; fatty acid biosynthesis. Its function is as follows. Catalyzes the condensation reaction of fatty acid synthesis by the addition to an acyl acceptor of two carbons from malonyl-ACP. Catalyzes the first condensation reaction which initiates fatty acid synthesis and may therefore play a role in governing the total rate of fatty acid production. Possesses both acetoacetyl-ACP synthase and acetyl transacylase activities. Its substrate specificity determines the biosynthesis of branched-chain and/or straight-chain of fatty acids. In Chlamydia caviae (strain ATCC VR-813 / DSM 19441 / 03DC25 / GPIC) (Chlamydophila caviae), this protein is Beta-ketoacyl-[acyl-carrier-protein] synthase III.